The following is a 467-amino-acid chain: Dimethylamine methyltransferase MtbB1 (467 aa).

Residue pyrrolysine 356 is a non-standard amino acid, pyrrolysine.

Belongs to the dimethylamine methyltransferase family.

The catalysed reaction is Co(I)-[dimethylamine-specific corrinoid protein] + dimethylamine + H(+) = methyl-Co(III)-[dimethylamine-specific corrinoid protein] + methylamine. It functions in the pathway one-carbon metabolism; methanogenesis from dimethylamine. Catalyzes the transfer of a methyl group from dimethylamine to the corrinoid cofactor of MtbC. This chain is Dimethylamine methyltransferase MtbB1 (mtbB1), found in Methanosarcina acetivorans (strain ATCC 35395 / DSM 2834 / JCM 12185 / C2A).